The chain runs to 1358 residues: Probable aldehyde oxidase 1 (1358 aa).

Residues 4–91 enclose the 2Fe-2S ferredoxin-type domain; the sequence is AAAVVAVNGE…HCAVTTSEGI (88 aa). Residues Cys43, Cys48, Cys51, and Cys73 each contribute to the [2Fe-2S] cluster site. One can recognise an FAD-binding PCMH-type domain in the interval 236 to 418; sequence AVTGDGCWFH…ISISIPDWCS (183 aa). The segment at 540-567 is disordered; the sequence is KPENANNVPNGSCTTNGTTNGSAESTVD. Residues 549–561 are compositionally biased toward low complexity; it reads NGSCTTNGTTNGS.

This sequence belongs to the xanthine dehydrogenase family. As to quaternary structure, aldehyde oxidases (AO) are homodimers and heterodimers of AO subunits. It depends on [2Fe-2S] cluster as a cofactor. FAD is required as a cofactor. Mo-molybdopterin serves as cofactor.

It carries out the reaction an aldehyde + O2 + H2O = a carboxylate + H2O2 + H(+). In Oryza sativa subsp. japonica (Rice), this protein is Probable aldehyde oxidase 1.